The primary structure comprises 468 residues: MGDNVQSDTTAAQAGITDAPTAPTSAPVSLKERLEKLIESSQQLIKRMDENNIPDPTFAPECQEDYSKLPPETITERFALLDLLNDVTFLVHGASQSITDVAQNAMADSATLNILNYFNFWDVIPLDGDASFAEIAKAVRLPQEAVEAILPYAFSNRIFEPVTIGDPNSRIRHTSRSAAMIKDPTLRIIVNLTIDGLAGPLSILNRALEKNFLGKEKLTNEISETPFGMLYNKGGPLGEYKDYYDWLDRDGEGERKGWRQRDMVESLRLAKEKMGAESALLEALDWAGAGKATVVDLGGSGGHDDVPLAEKFPDLKIIVQDLPSCQPKFDDGYISDELKKRVSFLAHDFFTPQPVQADIYLFKWVFYDWSNKDIVKIIKALVPALRPGARVLVLDLMVDVGPEAAAVMPRSLLKYSNVISLKTLSLFGHTKQATKKMTDLFKAADDRFEIVRDEVAGTFMTFEAVWRG.

Over residues 1 to 12 the composition is skewed to polar residues; it reads MGDNVQSDTTAA. The interval 1–29 is disordered; it reads MGDNVQSDTTAAQAGITDAPTAPTSAPVS. S-adenosyl-L-methionine-binding positions include 298–299, aspartate 321, 348–349, and lysine 363; these read GG and DF.

Belongs to the class I-like SAM-binding methyltransferase superfamily. Cation-independent O-methyltransferase family.

The protein operates within secondary metabolite biosynthesis. In terms of biological role, O-methyltransferase; part of the gene cluster that mediates the biosynthesis of the lipopeptide antibiotics leucinostatins that show extensive biological activities, including antimalarial, antiviral, antibacterial, antifungal, and antitumor activities, as well as phytotoxic. Leucinostatin A contains nine amino acid residues, including the unusual amino acid 4-methyl-L-proline (MePro), 2-amino-6-hydroxy-4-methyl-8-oxodecanoic acid (AHyMeOA), 3-hydroxyleucine (HyLeu), alpha-aminoisobutyric acid (AIB), beta-Ala, a 4-methylhex-2-enoic acid at the N-terminus as well as a N1,N1-dimethylpropane-1,2-diamine (DPD) at the C-terminus. The biosynthesis of leucinostatins is probably initiated with the assembly of 4-methylhex-2-enoic acid by a reducing PKS. Two reducing polyketide synthases, lcsB and lcsC, have been identified in the cluster and it is not clear which is the one that assembles 4-methylhex-2-enoic acid since both contain KS, AT, DH, cMT, ER, KR and ACP domains. The polyketide residue might be transferred to the NRPS lcsA, mediated by two additional enzymes, the acyl-CoA ligase lcsD and the thioesterase lcsE. The linear polyketide carboxylic acid, which is released from PKS, is converted to a CoA thioester by lcsD, and then lcsE hydrolyzes the thiol bond and shuttles the polyketide intermediate to lcsA. The C domain of the first module catalyzed the condensation of 4-methylhex-2-enoic acid and MePro carried by domain A1, followed by successive condensations of nine amino acids to trigger the elongation of the linear peptide. A5 and A6 domains of lcsA are proposed to incorporate leucine, A2 AHyMeOA, and A3 incorporates HyLeu. A4, A7 and A8 incorporate AIB. The AHyMeOA in leucinostatin A activated by the A2 might be produced by the second PKS (lcsB or lcsC) present within the cluster. The MePro is probably produced via leucine cyclization and may originate from a separate pathway, independent of the cluster. Another nonproteinogenic amino acid, beta-Ala, could be produced by an aspartic acid decarboxylase also localized outside of the cluster. Two candidates are VFPBJ_01400 and VFPBJ_10476. The final peptide scaffold may be released by the NAD(P)H-dependent thioester reductase (TE) at the C-terminal region of lcsA. Transamination of the lcsA product by the transaminase lcsP may produce DPD at the C-terminus. Further hydroxylation steps performed alternatively by the cytochrome P450 monooxygenases lcsI, lcsK and lcsN then yield the non-methylated leucinostatins precursor. It is also possible that leucines can be hydroxylated prior to their incorporation into the peptide. Varying extents of methylation then lead to the formation of leucinostatins A and B. The chain is O-methyltransferase lcsG from Purpureocillium lilacinum (Paecilomyces lilacinus).